Reading from the N-terminus, the 200-residue chain is Transgelin (200 aa).

Position 2 is an N-acetylserine (serine 2). Serine 11 carries the phosphoserine modification. Residues proline 26–alanine 136 enclose the Calponin-homology (CH) domain. Residues phenylalanine 144–glutamine 168 form a disordered region. An interaction with SH3 domain of ABP1 region spans residues leucine 151–proline 164. The span at lysine 154 to lysine 165 shows a compositional bias: basic residues.

As to quaternary structure, binds to actin. Interacts with ABP1.

The protein resides in the cytoplasm. It localises to the cytoskeleton. The protein localises to the actin patch. Functionally, has actin-binding and actin-bundling activity. Stabilizes actin filaments against disassembly. This is Transgelin (SCP1) from Saccharomyces cerevisiae (strain ATCC 204508 / S288c) (Baker's yeast).